Here is a 125-residue protein sequence, read N- to C-terminus: Large ribosomal subunit protein bL12 (125 aa).

This sequence belongs to the bacterial ribosomal protein bL12 family. In terms of assembly, homodimer. Part of the ribosomal stalk of the 50S ribosomal subunit. Forms a multimeric L10(L12)X complex, where L10 forms an elongated spine to which 2 to 4 L12 dimers bind in a sequential fashion. Binds GTP-bound translation factors.

Forms part of the ribosomal stalk which helps the ribosome interact with GTP-bound translation factors. Is thus essential for accurate translation. In Chlorobium phaeobacteroides (strain DSM 266 / SMG 266 / 2430), this protein is Large ribosomal subunit protein bL12.